Reading from the N-terminus, the 150-residue chain is MTNSFQNSRRDLRERAFQALFNIETGAELLAASQFAYGYDKVTGEDAQVLELPIFLLSLVTGVNNHKEELDNLISTHLKKGWSLERLTLTDKTLLRLGLFEIKYFDETPDRVALNEIIEVAKKYSDETSAKFINGLLSQYVSEAPSANKS.

This sequence belongs to the NusB family.

In terms of biological role, involved in transcription antitermination. Required for transcription of ribosomal RNA (rRNA) genes. Binds specifically to the boxA antiterminator sequence of the ribosomal RNA (rrn) operons. The chain is Transcription antitermination protein NusB from Streptococcus pyogenes serotype M6 (strain ATCC BAA-946 / MGAS10394).